A 330-amino-acid polypeptide reads, in one-letter code: 3'-5' exonuclease (330 aa).

The interval 1–92 (MDQYLIKMST…DGTPSPEKEI (92 aa)) is disordered. Composition is skewed to basic and acidic residues over residues 27–39 (NTTRQTKDAKEKI) and 48–66 (KDTPEIIKDKENADTENPP). Residues serine 79 and serine 87 each carry the phosphoserine modification. Residues 117-289 (SADEVMQWVE…IGQVIYRDIE (173 aa)) form the 3'-5' exonuclease domain. Mg(2+) is bound by residues aspartate 139, glutamate 141, and aspartate 277.

The protein belongs to the WRNexo family.

Its subcellular location is the nucleus. Has exonuclease activity on both single-stranded and duplex templates bearing overhangs, but not blunt ended duplex DNA, and cleaves in a 3'-5' direction. Essential for the formation of DNA replication focal centers. Has an important role in maintaining genome stability. This is 3'-5' exonuclease from Drosophila virilis (Fruit fly).